The following is a 449-amino-acid chain: UDP-N-acetylmuramoylalanine--D-glutamate ligase (449 aa).

118–124 (GTNGKTT) contributes to the ATP binding site.

This sequence belongs to the MurCDEF family.

It localises to the cytoplasm. The catalysed reaction is UDP-N-acetyl-alpha-D-muramoyl-L-alanine + D-glutamate + ATP = UDP-N-acetyl-alpha-D-muramoyl-L-alanyl-D-glutamate + ADP + phosphate + H(+). The protein operates within cell wall biogenesis; peptidoglycan biosynthesis. Its function is as follows. Cell wall formation. Catalyzes the addition of glutamate to the nucleotide precursor UDP-N-acetylmuramoyl-L-alanine (UMA). This is UDP-N-acetylmuramoylalanine--D-glutamate ligase from Staphylococcus saprophyticus subsp. saprophyticus (strain ATCC 15305 / DSM 20229 / NCIMB 8711 / NCTC 7292 / S-41).